Consider the following 227-residue polypeptide: Cytochrome c oxidase subunit 2 (227 aa).

Topologically, residues 1 to 14 are mitochondrial intermembrane; the sequence is MAHAAQVGLQDATS. The chain crosses the membrane as a helical span at residues 15–45; that stretch reads PIMEELIIFHDHALMIIFLICFLVLYALFLT. Residues 46–59 are Mitochondrial matrix-facing; it reads LTTKLTSTNISDAQ. A helical membrane pass occupies residues 60–87; sequence EMETVWTILPAIILVLIALPSLRILYMT. The Mitochondrial intermembrane segment spans residues 88–227; that stretch reads DEINDPSFTI…IFEMGPVFTL (140 aa). Positions 161, 196, 198, 200, 204, and 207 each coordinate Cu cation. Glu198 contributes to the Mg(2+) binding site.

Belongs to the cytochrome c oxidase subunit 2 family. In terms of assembly, component of the cytochrome c oxidase (complex IV, CIV), a multisubunit enzyme composed of 14 subunits. The complex is composed of a catalytic core of 3 subunits MT-CO1, MT-CO2 and MT-CO3, encoded in the mitochondrial DNA, and 11 supernumerary subunits COX4I, COX5A, COX5B, COX6A, COX6B, COX6C, COX7A, COX7B, COX7C, COX8 and NDUFA4, which are encoded in the nuclear genome. The complex exists as a monomer or a dimer and forms supercomplexes (SCs) in the inner mitochondrial membrane with NADH-ubiquinone oxidoreductase (complex I, CI) and ubiquinol-cytochrome c oxidoreductase (cytochrome b-c1 complex, complex III, CIII), resulting in different assemblies (supercomplex SCI(1)III(2)IV(1) and megacomplex MCI(2)III(2)IV(2)). Found in a complex with TMEM177, COA6, COX18, COX20, SCO1 and SCO2. Interacts with TMEM177 in a COX20-dependent manner. Interacts with COX20. Interacts with COX16. It depends on Cu cation as a cofactor.

The protein localises to the mitochondrion inner membrane. The catalysed reaction is 4 Fe(II)-[cytochrome c] + O2 + 8 H(+)(in) = 4 Fe(III)-[cytochrome c] + 2 H2O + 4 H(+)(out). In terms of biological role, component of the cytochrome c oxidase, the last enzyme in the mitochondrial electron transport chain which drives oxidative phosphorylation. The respiratory chain contains 3 multisubunit complexes succinate dehydrogenase (complex II, CII), ubiquinol-cytochrome c oxidoreductase (cytochrome b-c1 complex, complex III, CIII) and cytochrome c oxidase (complex IV, CIV), that cooperate to transfer electrons derived from NADH and succinate to molecular oxygen, creating an electrochemical gradient over the inner membrane that drives transmembrane transport and the ATP synthase. Cytochrome c oxidase is the component of the respiratory chain that catalyzes the reduction of oxygen to water. Electrons originating from reduced cytochrome c in the intermembrane space (IMS) are transferred via the dinuclear copper A center (CU(A)) of subunit 2 and heme A of subunit 1 to the active site in subunit 1, a binuclear center (BNC) formed by heme A3 and copper B (CU(B)). The BNC reduces molecular oxygen to 2 water molecules using 4 electrons from cytochrome c in the IMS and 4 protons from the mitochondrial matrix. In Gorilla gorilla beringei (Mountain gorilla), this protein is Cytochrome c oxidase subunit 2 (MT-CO2).